The following is a 391-amino-acid chain: 3-ketoacyl-CoA thiolase (391 aa).

The active-site Acyl-thioester intermediate is Cys95. Active-site proton acceptor residues include His347 and Cys377.

This sequence belongs to the thiolase-like superfamily. Thiolase family. As to quaternary structure, heterotetramer of two alpha chains (FadB) and two beta chains (FadA).

The protein resides in the cytoplasm. It catalyses the reaction an acyl-CoA + acetyl-CoA = a 3-oxoacyl-CoA + CoA. The protein operates within lipid metabolism; fatty acid beta-oxidation. Catalyzes the final step of fatty acid oxidation in which acetyl-CoA is released and the CoA ester of a fatty acid two carbons shorter is formed. In Pseudomonas entomophila (strain L48), this protein is 3-ketoacyl-CoA thiolase.